The chain runs to 434 residues: Enolase (434 aa).

(2R)-2-phosphoglycerate is bound at residue glutamine 165. Catalysis depends on glutamate 207, which acts as the Proton donor. Mg(2+) is bound by residues aspartate 244, glutamate 291, and aspartate 318. Lysine 343, arginine 372, serine 373, and lysine 394 together coordinate (2R)-2-phosphoglycerate. The active-site Proton acceptor is the lysine 343.

Belongs to the enolase family. Mg(2+) is required as a cofactor.

It localises to the cytoplasm. Its subcellular location is the secreted. It is found in the cell surface. It catalyses the reaction (2R)-2-phosphoglycerate = phosphoenolpyruvate + H2O. It functions in the pathway carbohydrate degradation; glycolysis; pyruvate from D-glyceraldehyde 3-phosphate: step 4/5. Functionally, catalyzes the reversible conversion of 2-phosphoglycerate (2-PG) into phosphoenolpyruvate (PEP). It is essential for the degradation of carbohydrates via glycolysis. This is Enolase from Macrococcus caseolyticus (strain JCSC5402) (Macrococcoides caseolyticum).